The sequence spans 218 residues: GILT-like protein ZK669.3 (218 aa).

The signal sequence occupies residues 1–21; that stretch reads MRRLNGVFICLILFITKISYA. N-linked (GlcNAc...) asparagine glycosylation is found at Asn129 and Asn185.

The protein belongs to the GILT family.

Its subcellular location is the secreted. This is GILT-like protein ZK669.3 from Caenorhabditis elegans.